The chain runs to 305 residues: Glycine--tRNA ligase alpha subunit (305 aa).

Belongs to the class-II aminoacyl-tRNA synthetase family. As to quaternary structure, tetramer of two alpha and two beta subunits.

It localises to the cytoplasm. The enzyme catalyses tRNA(Gly) + glycine + ATP = glycyl-tRNA(Gly) + AMP + diphosphate. In Streptococcus pneumoniae (strain P1031), this protein is Glycine--tRNA ligase alpha subunit.